Consider the following 491-residue polypeptide: Ketol-acid reductoisomerase (NADP(+)) (491 aa).

Positions 15–208 (AQLGKCRFMG…GGHRAGVLES (194 aa)) constitute a KARI N-terminal Rossmann domain. Residues 45–48 (CGAQ), R68, R76, S78, and 108–110 (DKQ) each bind NADP(+). The active site involves H132. G158 lines the NADP(+) pocket. KARI C-terminal knotted domains lie at 209-344 (SFVA…TAPQ) and 345-484 (YEGK…MTDM). 4 residues coordinate Mg(2+): D217, E221, E389, and E393. S414 is a substrate binding site.

This sequence belongs to the ketol-acid reductoisomerase family. Mg(2+) is required as a cofactor.

The enzyme catalyses (2R)-2,3-dihydroxy-3-methylbutanoate + NADP(+) = (2S)-2-acetolactate + NADPH + H(+). It catalyses the reaction (2R,3R)-2,3-dihydroxy-3-methylpentanoate + NADP(+) = (S)-2-ethyl-2-hydroxy-3-oxobutanoate + NADPH + H(+). Its pathway is amino-acid biosynthesis; L-isoleucine biosynthesis; L-isoleucine from 2-oxobutanoate: step 2/4. It functions in the pathway amino-acid biosynthesis; L-valine biosynthesis; L-valine from pyruvate: step 2/4. In terms of biological role, involved in the biosynthesis of branched-chain amino acids (BCAA). Catalyzes an alkyl-migration followed by a ketol-acid reduction of (S)-2-acetolactate (S2AL) to yield (R)-2,3-dihydroxy-isovalerate. In the isomerase reaction, S2AL is rearranged via a Mg-dependent methyl migration to produce 3-hydroxy-3-methyl-2-ketobutyrate (HMKB). In the reductase reaction, this 2-ketoacid undergoes a metal-dependent reduction by NADPH to yield (R)-2,3-dihydroxy-isovalerate. The sequence is that of Ketol-acid reductoisomerase (NADP(+)) from Shigella flexneri.